The following is a 391-amino-acid chain: Probable methanogen homoaconitase large subunit (391 aa).

The [4Fe-4S] cluster site is built by Cys275, Cys333, and Cys336.

This sequence belongs to the aconitase/IPM isomerase family. LeuC type 2 subfamily. Heterotetramer of 2 HacA and 2 HacB proteins.

It catalyses the reaction (2R)-homocitrate = (2R,3S)-homoisocitrate. It carries out the reaction (2R)-homocitrate = cis-homoaconitate + H2O. The catalysed reaction is (2R,3S)-homoisocitrate = cis-homoaconitate + H2O. The enzyme catalyses cis-(homo)2aconitate + H2O = (2R,3S)-iso(homo)2citrate. It catalyses the reaction cis-(homo)3aconitate + H2O = (2R,3S)-iso(homo)3citrate. Its pathway is organic acid metabolism; 2-oxosuberate biosynthesis. Component of a hydro-lyase with broad substrate specificity for cis-unsaturated tricarboxylic acids. Catalyzes both the reversible dehydration of (R)-homocitrate ((R)-2-hydroxybutane-1,2,4-tricarboxylate) to produce cis-homoaconitate ((Z)-but-1-ene-1,2,4-tricarboxylate), and its hydration to homoisocitrate ((1R,2S)-1-hydroxybutane-1,2,4-tricarboxylate). Is also able to hydrate the analogous longer chain substrates cis-homo(2)-aconitate, cis-homo(3)-aconitate. These reactions are part of the biosynthesis pathway of coenzyme B. This is Probable methanogen homoaconitase large subunit (hacA) from Methanosarcina mazei (strain ATCC BAA-159 / DSM 3647 / Goe1 / Go1 / JCM 11833 / OCM 88) (Methanosarcina frisia).